Reading from the N-terminus, the 678-residue chain is Oviduct-specific glycoprotein (678 aa).

Positions 1–21 (MWKLLLWVGLVLVLKHHDGAA) are cleaved as a signal peptide. The GH18 domain occupies 22-385 (HKLVCYFTNW…YVLNDILVRA (364 aa)). C26 and C51 are disulfide-bonded. Chitin-binding positions include 71-72 (LQ), 98-101 (GGWN), Y142, 211-214 (LSYD), and W355. Residues N402 and N441 are each glycosylated (N-linked (GlcNAc...) asparagine). Residues 524–544 (LTPVGHQSVTPVSHQSVSPGG) are disordered. Positions 528 to 544 (GHQSVTPVSHQSVSPGG) are enriched in polar residues. N-linked (GlcNAc...) asparagine glycosylation is found at N580, N596, and N648. The tract at residues 581–606 (ISVTPEGQTMPLRGENLTSEVGTHPR) is disordered. Residues 651-662 (SVNSVTPQTSPL) are compositionally biased toward polar residues. The interval 651 to 678 (SVNSVTPQTSPLSLKKEIPENSAVDEEA) is disordered.

This sequence belongs to the glycosyl hydrolase 18 family. Oviduct.

The protein resides in the cytoplasmic vesicle. Its subcellular location is the secretory vesicle. Its function is as follows. Binds to oocyte zona pellucida in vivo. May play a role in the fertilization process and/or early embryonic development. This is Oviduct-specific glycoprotein (OVGP1) from Homo sapiens (Human).